The sequence spans 242 residues: Probable transcriptional regulatory protein Bcep18194_A5621 (242 aa).

It belongs to the TACO1 family.

The protein localises to the cytoplasm. This is Probable transcriptional regulatory protein Bcep18194_A5621 from Burkholderia lata (strain ATCC 17760 / DSM 23089 / LMG 22485 / NCIMB 9086 / R18194 / 383).